We begin with the raw amino-acid sequence, 131 residues long: Small ribosomal subunit protein uS8 (131 aa).

This sequence belongs to the universal ribosomal protein uS8 family. In terms of assembly, part of the 30S ribosomal subunit. Contacts proteins S5 and S12.

One of the primary rRNA binding proteins, it binds directly to 16S rRNA central domain where it helps coordinate assembly of the platform of the 30S subunit. This Polaromonas naphthalenivorans (strain CJ2) protein is Small ribosomal subunit protein uS8.